Consider the following 195-residue polypeptide: Large ribosomal subunit protein bL27c (195 aa).

A chloroplast-targeting transit peptide spans 1–60; sequence MASMAFTLVGAFKGMSLSSPCHSSSSASFLRADRVSLSVGGGVGMGVPMTMPVRRLTIQM.

The protein belongs to the bacterial ribosomal protein bL27 family. As to quaternary structure, part of the 50S ribosomal subunit.

Its subcellular location is the plastid. It localises to the chloroplast. The protein is Large ribosomal subunit protein bL27c (RPL27) of Oryza sativa subsp. japonica (Rice).